We begin with the raw amino-acid sequence, 51 residues long: Large ribosomal subunit protein eL39 (51 aa).

The span at 1-15 (MAAKKSFKIKQKLAK) shows a compositional bias: basic residues. The interval 1–21 (MAAKKSFKIKQKLAKAKNQNR) is disordered.

Belongs to the eukaryotic ribosomal protein eL39 family. In terms of assembly, interacts with YIH1.

In Eremothecium gossypii (strain ATCC 10895 / CBS 109.51 / FGSC 9923 / NRRL Y-1056) (Yeast), this protein is Large ribosomal subunit protein eL39 (RPL39).